Consider the following 844-residue polypeptide: Translation initiation factor IF-2 (844 aa).

Positions 1–11 (MTEDVKADVPK) are enriched in basic and acidic residues. Disordered stretches follow at residues 1–35 (MTED…SKAV) and 79–248 (RLEA…KGAA). The segment covering 21–33 (TTVSGTTTSGKSK) has biased composition (low complexity). Over residues 79–161 (RLEAEKAATK…AAEEAKRYAE (83 aa)) the composition is skewed to basic and acidic residues. Acidic residues predominate over residues 162 to 175 (ADDSDNESSSEDYS). Positions 200–210 (RGKNKVAKAKK) are enriched in basic residues. Basic and acidic residues predominate over residues 211–237 (GGRDDENSKNSKNERESNRKNQKDAKF). The tr-type G domain maps to 343-513 (TRAPVVTIMG…LLQSEVLELT (171 aa)). Positions 352–359 (GHVDHGKT) are G1. 352–359 (GHVDHGKT) contributes to the GTP binding site. The interval 377–381 (GITQH) is G2. The G3 stretch occupies residues 399 to 402 (DTPG). GTP-binding positions include 399–403 (DTPGH) and 453–456 (NKID). The tract at residues 453-456 (NKID) is G4. The segment at 489-491 (SAK) is G5.

It belongs to the TRAFAC class translation factor GTPase superfamily. Classic translation factor GTPase family. IF-2 subfamily.

The protein localises to the cytoplasm. In terms of biological role, one of the essential components for the initiation of protein synthesis. Protects formylmethionyl-tRNA from spontaneous hydrolysis and promotes its binding to the 30S ribosomal subunits. Also involved in the hydrolysis of GTP during the formation of the 70S ribosomal complex. This chain is Translation initiation factor IF-2, found in Haemophilus influenzae (strain PittGG).